Here is a 215-residue protein sequence, read N- to C-terminus: Ribose-5-phosphate isomerase A (215 aa).

Substrate is bound by residues 26 to 29 (TGST), 79 to 82 (DGAD), and 92 to 95 (KGGG). Glu101 (proton acceptor) is an active-site residue. Residue Lys119 participates in substrate binding.

It belongs to the ribose 5-phosphate isomerase family. In terms of assembly, homodimer.

It catalyses the reaction aldehydo-D-ribose 5-phosphate = D-ribulose 5-phosphate. It participates in carbohydrate degradation; pentose phosphate pathway; D-ribose 5-phosphate from D-ribulose 5-phosphate (non-oxidative stage): step 1/1. Its function is as follows. Catalyzes the reversible conversion of ribose-5-phosphate to ribulose 5-phosphate. This is Ribose-5-phosphate isomerase A from Xanthomonas campestris pv. campestris (strain 8004).